The chain runs to 136 residues: Protein PsiE homolog (136 aa).

4 helical membrane passes run 15-35, 58-78, 83-103, and 108-128; these read AMQTVLNLGLLCLGIILIVFL, VEGLVVYFLYFEFIALIVKYF, HFPLRYFVYIGITAIVRLIII, and PMAVLIYSAAILILVITLWLC.

Belongs to the PsiE family.

The protein localises to the cell inner membrane. The sequence is that of Protein PsiE homolog from Klebsiella pneumoniae (strain 342).